The chain runs to 323 residues: tRNA dimethylallyltransferase (323 aa).

12–19 contributes to the ATP binding site; sequence GPTAAGKT. Substrate is bound at residue 14 to 19; it reads TAAGKT. 2 interaction with substrate tRNA regions span residues 37–40 and 161–165; these read DSAL and QRLSR.

Belongs to the IPP transferase family. In terms of assembly, monomer. It depends on Mg(2+) as a cofactor.

The catalysed reaction is adenosine(37) in tRNA + dimethylallyl diphosphate = N(6)-dimethylallyladenosine(37) in tRNA + diphosphate. Catalyzes the transfer of a dimethylallyl group onto the adenine at position 37 in tRNAs that read codons beginning with uridine, leading to the formation of N6-(dimethylallyl)adenosine (i(6)A). The chain is tRNA dimethylallyltransferase from Pseudomonas fluorescens (strain SBW25).